A 596-amino-acid chain; its full sequence is Invasin CotH7 (596 aa).

An N-terminal signal peptide occupies residues 1–17; the sequence is MKSLSFISLACLTAVHA. Asn82, Asn146, Asn163, Asn169, Asn288, Asn440, and Asn544 each carry an N-linked (GlcNAc...) asparagine glycan. The span at 528–544 shows a compositional bias: low complexity; the sequence is SATIAAPATSESASQDN. Residues 528 to 557 are disordered; it reads SATIAAPATSESASQDNTSDDTDSASTSSS. The GPI-anchor amidated serine moiety is linked to residue Ser567. A propeptide spans 568–596 (removed in mature form); sequence SASKSAPTFYCLQLVLYLSLSFKNLYKYI.

As to quaternary structure, interacts with host integrin beta-1 ITGB1 on the cell surface of host alveolar epithelial cells.

The protein resides in the cell membrane. Its function is as follows. Promotes invasion of host epithelial cells by adhering to receptors on the host cell surface to facilitate endocytosis of the pathogen into host cells. Probably binds integrin ITGA3:ITGB1 via ITGB1, on the cell surface of host alveolar epithelial cells. This Rhizopus delemar (strain RA 99-880 / ATCC MYA-4621 / FGSC 9543 / NRRL 43880) (Mucormycosis agent) protein is Invasin CotH7.